We begin with the raw amino-acid sequence, 119 residues long: Amicyanin-alpha (119 aa).

Residues 1 to 20 (MRALAFAAALAAFSATAALA) form the signal peptide. Residues 21-119 (AGALEAVQEA…PFMKGKVVVE (99 aa)) form the Plastocyanin-like domain. 4 residues coordinate Cu cation: His67, Cys106, His109, and Met112.

The cofactor is Cu cation.

It localises to the periplasm. It functions in the pathway one-carbon metabolism; methylamine degradation. Primary acceptor of electrons from methylamine dehydrogenase. Passes those electrons on either a soluble cytochrome c or to pseudoazurin. The protein is Amicyanin-alpha (mauC) of Methylorubrum extorquens (strain ATCC 14718 / DSM 1338 / JCM 2805 / NCIMB 9133 / AM1) (Methylobacterium extorquens).